The chain runs to 783 residues: MVIMSEFSADPAGQGQGQQKPLRVGFYDIERTLGKGNFAVVKLARHRVTKTQVAIKIIDKTRLDSSNLEKIYREVQLMKLLNHPHIIKLYQVMETKDMLYIVTEFAKNGEMFDYLTSNGHLSENEARKKFWQILSAVEYCHDHHIVHRDLKTENLLLDGNMDIKLADFGFGNFYKSGEPLSTWCGSPPYAAPEVFEGKEYEGPQLDIWSLGVVLYVLVCGSLPFDGPNLPTLRQRVLEGRFRIPFFMSQDCESLIRRMLVVDPARRITIAQIRQHRWMRAEPCLPGPACPAFSAHSYTSNLGDYDEQALGIMQTLGVDRQRTVESLQNSSYNHFAAIYYLLLERLKEYRNAQCARPGPARQPRPRSSDLSGLEVPQEGLSTDPFRPALLCPQPQTLVQSVLQAEMDCELQSSLQWPLFFPVDASCSGVFRPRPVSPSSLLDTAISEEARQGPGLEEEQDTQESLPSSTGRRHTLAEVSTRLSPLTAPCIVVSPSTTASPAEGTSSDSCLTFSASKSPAGLSGTPATQGLLGACSPVRLASPFLGSQSATPVLQAQGGLGGAVLLPVSFQEGRRASDTSLTQGLKAFRQQLRKTTRTKGFLGLNKIKGLARQVCQAPASRASRGGLSPFHAPAQSPGLHGGAAGSREGWSLLEEVLEQQRLLQLQHHPAAAPGCSQAPQPAPAPFVIAPCDGPGAAPLPSTLLTSGLPLLPPPLLQTGASPVASAAQLLDTHLHIGTGPTALPAVPPPRLARLAPGCEPLGLLQGDCEMEDLMPCSLGTFVLVQ.

Positions 27–278 constitute a Protein kinase domain; that stretch reads YDIERTLGKG…IAQIRQHRWM (252 aa). ATP is bound by residues 33-41 and Lys-56; that span reads LGKGNFAVV. Catalysis depends on Asp-149, which acts as the Proton acceptor. The residue at position 182 (Thr-182) is a Phosphothreonine; by LKB1 and GSK3-beta. Position 186 is a phosphoserine; by autocatalysis (Ser-186). Residues 303-343 enclose the UBA domain; sequence DYDEQALGIMQTLGVDRQRTVESLQNSSYNHFAAIYYLLLE. Position 322 is a phosphothreonine; by CaMK1 (Thr-322). 2 disordered regions span residues 353-377 and 449-477; these read CARP…VPQE and RQGP…LAEV. Thr-473 is modified (phosphothreonine; by PKA). Phosphoserine; by PKA is present on Ser-575. The tract at residues 583–612 is RK-rich region; required for cAMP responsiveness and nuclear localization; that stretch reads LKAFRQQLRKTTRTKGFLGLNKIKGLARQV. The disordered stretch occupies residues 619–643; that stretch reads RASRGGLSPFHAPAQSPGLHGGAAG.

Belongs to the protein kinase superfamily. CAMK Ser/Thr protein kinase family. AMPK subfamily. Interacts with ATP1A1. Interacts (when phosphorylated on Thr-182 and Ser-186) with YWHAZ. Interacts (when phosphorylated at Thr-473 and/or Ser-575) with 14-3-3 proteins; the interaction inhibits kinase activity towards TORCs. There is a cooperative effect of the phosphorylation sites in 14-3-3 binding as the interaction is stronger when both Thr-473 and Ser-575 are modified. It depends on Mg(2+) as a cofactor. Post-translationally, phosphorylated at Thr-182 by STK11/LKB1 in complex with STE20-related adapter-alpha (STRADA) pseudo kinase and CAB39, leading to its activation. Phosphorylation at Thr-182 promotes autophosphorylation at Ser-186, which is required for sustained activity. Autophosphorylation at Ser-186 is maintained by sequential phosphorylation at Thr-182 by GSK3-beta. GSK3-beta cannot initiate phosphorylation at Thr-182, it can only maintain it. Phosphorylation at Ser-575 in response to cAMP signaling promotes translocation to the cytoplasm. Phosphorylation at Thr-322 by CaMK1 following intracellular sodium concentration leads to activation.

It localises to the cytoplasm. Its subcellular location is the nucleus. The enzyme catalyses L-seryl-[protein] + ATP = O-phospho-L-seryl-[protein] + ADP + H(+). The catalysed reaction is L-threonyl-[protein] + ATP = O-phospho-L-threonyl-[protein] + ADP + H(+). Activated by phosphorylation on Thr-182. Also activated by phosphorylation on Thr-322 in response to increases in intracellular sodium in parallel with elevations in intracellular calcium through the reversible sodium/calcium exchanger. Inhibited by phosphorylation at Thr-473 and Ser-575, probably by PKA, which triggers interaction with 14-3-3 proteins. Serine/threonine-protein kinase involved in various processes such as cell cycle regulation, gluconeogenesis and lipogenesis regulation, muscle growth and differentiation and tumor suppression. Phosphorylates HDAC4, HDAC5, PPME1, SREBF1, CRTC1/TORC1. Inhibits CREB activity by phosphorylating and inhibiting activity of TORCs, the CREB-specific coactivators, like CRTC2/TORC2 and CRTC3/TORC3 in response to cAMP signaling. Acts as a tumor suppressor and plays a key role in p53/TP53-dependent anoikis, a type of apoptosis triggered by cell detachment: required for phosphorylation of p53/TP53 in response to loss of adhesion and is able to suppress metastasis. Part of a sodium-sensing signaling network, probably by mediating phosphorylation of PPME1: following increases in intracellular sodium, SIK1 is activated by CaMK1 and phosphorylates PPME1 subunit of protein phosphatase 2A (PP2A), leading to dephosphorylation of sodium/potassium-transporting ATPase ATP1A1 and subsequent increase activity of ATP1A1. Acts as a regulator of muscle cells by phosphorylating and inhibiting class II histone deacetylases HDAC4 and HDAC5, leading to promote expression of MEF2 target genes in myocytes. Also required during cardiomyogenesis by regulating the exit of cardiomyoblasts from the cell cycle via down-regulation of CDKN1C/p57Kip2. Acts as a regulator of hepatic gluconeogenesis by phosphorylating and repressing the CREB-specific coactivators CRTC1/TORC1 and CRTC2/TORC2, leading to inhibit CREB activity. Also regulates hepatic lipogenesis by phosphorylating and inhibiting SREBF1. In concert with CRTC1/TORC1, regulates the light-induced entrainment of the circadian clock by attenuating PER1 induction; represses CREB-mediated transcription of PER1 by phosphorylating and deactivating CRTC1/TORC1. In Homo sapiens (Human), this protein is Serine/threonine-protein kinase SIK1 (SIK1).